Consider the following 304-residue polypeptide: Ribosomal RNA small subunit methyltransferase H (304 aa).

S-adenosyl-L-methionine is bound by residues 37–39 (GGH), Asp-57, Phe-85, Asp-100, and His-107.

This sequence belongs to the methyltransferase superfamily. RsmH family.

It localises to the cytoplasm. It catalyses the reaction cytidine(1402) in 16S rRNA + S-adenosyl-L-methionine = N(4)-methylcytidine(1402) in 16S rRNA + S-adenosyl-L-homocysteine + H(+). Specifically methylates the N4 position of cytidine in position 1402 (C1402) of 16S rRNA. The polypeptide is Ribosomal RNA small subunit methyltransferase H (Azobacteroides pseudotrichonymphae genomovar. CFP2).